A 228-amino-acid chain; its full sequence is ATP phosphoribosyltransferase (228 aa).

Belongs to the ATP phosphoribosyltransferase family. Short subfamily. In terms of assembly, heteromultimer composed of HisG and HisZ subunits.

The protein resides in the cytoplasm. It catalyses the reaction 1-(5-phospho-beta-D-ribosyl)-ATP + diphosphate = 5-phospho-alpha-D-ribose 1-diphosphate + ATP. Its pathway is amino-acid biosynthesis; L-histidine biosynthesis; L-histidine from 5-phospho-alpha-D-ribose 1-diphosphate: step 1/9. Functionally, catalyzes the condensation of ATP and 5-phosphoribose 1-diphosphate to form N'-(5'-phosphoribosyl)-ATP (PR-ATP). Has a crucial role in the pathway because the rate of histidine biosynthesis seems to be controlled primarily by regulation of HisG enzymatic activity. This is ATP phosphoribosyltransferase from Acinetobacter baylyi (strain ATCC 33305 / BD413 / ADP1).